The chain runs to 134 residues: Small ribosomal subunit protein bS6 (134 aa).

Residues 99–134 (PSQLAKSADEKRARKAPRSENFDNDQDDESNDDSDE) are disordered. The segment covering 105-119 (SADEKRARKAPRSEN) has biased composition (basic and acidic residues). The span at 120-134 (FDNDQDDESNDDSDE) shows a compositional bias: acidic residues.

The protein belongs to the bacterial ribosomal protein bS6 family.

Its function is as follows. Binds together with bS18 to 16S ribosomal RNA. The polypeptide is Small ribosomal subunit protein bS6 (Psychrobacter sp. (strain PRwf-1)).